The sequence spans 2581 residues: Chromodomain-helicase-DNA-binding protein 8 (2581 aa).

Disordered stretches follow at residues 22-114 (DDSF…QTST), 253-281 (VKGS…TPAQ), and 349-375 (QKIQ…PLTL). Composition is skewed to polar residues over residues 42–64 (SLDS…SSAS) and 94–114 (DYTT…QTST). A compositionally biased stretch (low complexity) spans 255–267 (GSAPAGNPGATGP). Residues 355–370 (PQPPSSQPQPQPPPSA) show a composition bias toward pro residues. Ser432 bears the Phosphoserine mark. Disordered regions lie at residues 473–584 (RARG…KRKK) and 596–616 (DEEE…ILPE). Over residues 493-516 (RPEEEGEKKRRKKSSGERLKEEKP) the composition is skewed to basic and acidic residues. Phosphoserine occurs at positions 553 and 562. Positions 572–584 (QKRRSNRQVKRKK) are enriched in basic residues. Residue Lys609 forms a Glycyl lysine isopeptide (Lys-Gly) (interchain with G-Cter in SUMO) linkage. Chromo domains lie at 642-709 (AIVD…AQMR) and 724-790 (VEVD…RVNR). Positions 823-997 (LFNWYNRQNC…FSLLHFLEPS (175 aa)) constitute a Helicase ATP-binding domain. 836–843 (DEMGLGKT) contributes to the ATP binding site. The DEAH box signature appears at 948 to 951 (DEAH). The Helicase C-terminal domain occupies 1137–1288 (LIDKLLPKLK…KAVLQSMSGR (152 aa)). A phosphoserine mark is found at Ser1420 and Ser1424. The disordered stretch occupies residues 1692–1713 (EDPEYKPLQGPPKDPDDEGDPL). Residues 1789–2302 (IARREKQQRW…LVELEVECME (514 aa)) form an interaction with FAM124B region. Residues Ser1976 and Ser1978 each carry the phosphoserine modification. Residues 1988 to 2016 (QCTSRTASPSPLRPDVPAEKSPEENAVQV) form a disordered region. A Phosphothreonine modification is found at Thr1993. Ser1995, Ser1997, and Ser2008 each carry phosphoserine. A Glycyl lysine isopeptide (Lys-Gly) (interchain with G-Cter in SUMO2) cross-link involves residue Lys2025. Disordered regions lie at residues 2047 to 2118 (SSDT…YDEE) and 2179 to 2221 (NRRS…SSSA). Residues 2063–2072 (EDDDDSDSEL) are compositionally biased toward acidic residues. A phosphoserine mark is found at Ser2068 and Ser2070. A compositionally biased stretch (low complexity) spans 2075-2094 (SKLSPSSSSSSSSSSSSSSS). Residues 2102 to 2116 (EEKLTADRSRPKLYD) are compositionally biased toward basic and acidic residues. Phosphoserine occurs at positions 2182, 2200, and 2202. Thr2204 is modified (phosphothreonine). Position 2211 is a phosphoserine (Ser2211). A Phosphothreonine modification is found at Thr2215. Ser2223 carries the post-translational modification Phosphoserine. Lys2256 is covalently cross-linked (Glycyl lysine isopeptide (Lys-Gly) (interchain with G-Cter in SUMO2)). Residues 2484-2581 (PHVDSSTMLH…NSDSSDDADD (98 aa)) form a disordered region. The segment covering 2492 to 2510 (LHHHHHHPHPHHHHHHHPG) has biased composition (basic residues). Residues 2513 to 2528 (TTGYPSSPATTTSGTA) show a composition bias toward low complexity. A Phosphoserine modification is found at Ser2519. The span at 2537–2550 (EDDDEEEDEDDDDL) shows a compositional bias: acidic residues. Residues 2565–2574 (DDPMMPANSD) are compositionally biased toward low complexity.

The protein belongs to the SNF2/RAD54 helicase family. CHD8 subfamily. Interacts with p53/TP53, histone H1 and CTCF. Component of some MLL1/MLL complex, at least composed of the core components KMT2A/MLL1, ASH2L, HCFC1/HCF1, WDR5 and RBBP5, as well as the facultative components BACC1, CHD8, E2F6, HSP70, INO80C, KANSL1, LAS1L, MAX, MCRS1, MGA, KAT8/MOF, PELP1, PHF20, PRP31, RING2, RUVB1/TIP49A, RUVB2/TIP49B, SENP3, TAF1, TAF4, TAF6, TAF7, TAF9 and TEX10. Interacts with CHD7. Interacts with FAM124B. Interacts with CTNNB1. Interacts with PIAS3. Interacts with TLK2. Interacts with HNRNPL in an RNA-dependent manner. Post-translationally, sumoylated.

It is found in the nucleus. It catalyses the reaction ATP + H2O = ADP + phosphate + H(+). Its function is as follows. ATP-dependent chromatin-remodeling factor, it slides nucleosomes along DNA; nucleosome sliding requires ATP. Acts as a transcription repressor by remodeling chromatin structure and recruiting histone H1 to target genes. Suppresses p53/TP53-mediated apoptosis by recruiting histone H1 and preventing p53/TP53 transactivation activity. Acts as a negative regulator of Wnt signaling pathway by regulating beta-catenin (CTNNB1) activity. Negatively regulates CTNNB1-targeted gene expression by being recruited specifically to the promoter regions of several CTNNB1 responsive genes. Involved in both enhancer blocking and epigenetic remodeling at chromatin boundary via its interaction with CTCF. Acts as a suppressor of STAT3 activity by suppressing the LIF-induced STAT3 transcriptional activity. Also acts as a transcription activator via its interaction with ZNF143 by participating in efficient U6 RNA polymerase III transcription. Regulates alternative splicing of a core group of genes involved in neuronal differentiation, cell cycle and DNA repair. Enables H3K36me3-coupled transcription elongation and co-transcriptional RNA processing likely via interaction with HNRNPL. The chain is Chromodomain-helicase-DNA-binding protein 8 from Rattus norvegicus (Rat).